Consider the following 1706-residue polypeptide: Cadherin-99C (1706 aa).

Positions 1 to 28 (MAARNSLTPQQGLGFFGLLILLCSAVLG) are cleaved as a signal peptide. Residues 29–1395 (KSQMCEVETG…AIDNEVFPFT (1367 aa)) lie on the Extracellular side of the membrane. Cadherin domains follow at residues 68 to 142 (DPDT…APRF), 143 to 264 (MNTP…DPSF), 277 to 387 (INPE…PPVI), 388 to 500 (SSSQ…APKL), 519 to 604 (VTQV…PPRF), 605 to 704 (QKPI…NPEF), 707 to 807 (STLP…VPKF), 808 to 908 (SDAR…PPRF), 909 to 1005 (ITVP…RVDV), 1038 to 1148 (SDDS…APEF), and 1156 to 1270 (QQDT…ALSF). N105 and N188 each carry an N-linked (GlcNAc...) asparagine glycan. Residues N442, N553, N620, and N753 are each glycosylated (N-linked (GlcNAc...) asparagine). N-linked (GlcNAc...) asparagine glycans are attached at residues N1053, N1088, and N1108. N1311 and N1367 each carry an N-linked (GlcNAc...) asparagine glycan. A helical transmembrane segment spans residues 1396 to 1416 (LIAISLVILILGTIGIIYICI). The Cytoplasmic portion of the chain corresponds to 1417-1706 (SWSKYKNFKQ…RSEVETTTEL (290 aa)).

As to quaternary structure, interacts (via the cytoplasmic domain) with ck. Interacts (via the cytoplasmic domain) with Cul1 and Ubr3.

The protein resides in the apical cell membrane. The protein localises to the endosome membrane. It localises to the cell projection. It is found in the microvillus membrane. Cadherin that functions in epithelial morphogenesis and the intestine epithelial immune response. Essential for female fertility. Regulates the length and organization of apical microvilli in developing follicle cells and salivary glands. Function in the follicle cell is essential for egg development as the microvilli secrete eggshell material such as the vitelline membrane. Acts at least in part by regulating the recruitment of the myosin ck to the follicle cell microvilli. Also required to regulate cell rearrangements during salivary tube elongation, possibly by modulating cellular adhesion between the apical surface and apical extracellular matrix during epithelial tube elongation. May also function in cellular adhesion during the development of other tubular epithelia such as the trachea. Possibly functions as an apical membrane determinant which acts in apical membrane expansion during salivary and tracheal epithelial tube elongation. In salivary gland development, this function is independent of the other apical membrane determinants crb and sas. Essential downstream component of a hh-signaling pathway which regulates the Duox-dependent gut epithelial immune response to bacterial uracil; required for endosome formation in the enterocyte and activating norpA-dependent Ca2+ mobilization, which are essential steps in the Duox-dependent production of reactive oxygen species (ROS) in response to intestinal bacterial infection. The polypeptide is Cadherin-99C (Drosophila melanogaster (Fruit fly)).